Consider the following 289-residue polypeptide: G1/S-specific cyclin-D2 (289 aa).

The region spanning 26-151 (VLQNLLTIEE…VVLGKLKWNL (126 aa)) is the Cyclin N-terminal domain. Residues 264 to 289 (DQRDGSKSEDELDQASTPTDVRDIDL) form a disordered region. At S271 the chain carries Phosphoserine. Position 280 is a phosphothreonine (T280).

This sequence belongs to the cyclin family. Cyclin D subfamily. Interacts with either CDK4 or CDK6 protein kinase to form a serine/threonine kinase holoenzyme complex. The cyclin subunit imparts substrate specificity to the complex. Post-translationally, phosphorylation at Thr-280 by MAP kinases is required for ubiquitination and degradation by the DCX(AMBRA1) complex. In terms of processing, ubiquitinated by the DCX(AMBRA1) complex during the transition from G1 to S cell phase, leading to its degradation: ubiquitination is dependent on Thr-280 phosphorylation. The DCX(AMBRA1) complex represents the major regulator of CCND2 stability during the G1/S transition. Polyubiquitinated by the SCF(FBXL2) complex, leading to proteasomal degradation.

Its subcellular location is the nucleus. The protein resides in the cytoplasm. It is found in the nucleus membrane. Its function is as follows. Regulatory component of the cyclin D2-CDK4 (DC) complex that phosphorylates and inhibits members of the retinoblastoma (RB) protein family including RB1 and regulates the cell-cycle during G(1)/S transition. Phosphorylation of RB1 allows dissociation of the transcription factor E2F from the RB/E2F complex and the subsequent transcription of E2F target genes which are responsible for the progression through the G(1) phase. Hypophosphorylates RB1 in early G(1) phase. Cyclin D-CDK4 complexes are major integrators of various mitogenenic and antimitogenic signals. In Homo sapiens (Human), this protein is G1/S-specific cyclin-D2.